The sequence spans 435 residues: 5-hydroxybenzimidazole synthase (435 aa).

Residues methionine 95, tyrosine 124, histidine 163, 186–188, 227–230, and glutamate 266 each bind substrate; these read SKG and NGLR. A Zn(2+)-binding site is contributed by histidine 270. Tyrosine 293 provides a ligand contact to substrate. Histidine 334 serves as a coordination point for Zn(2+). [4Fe-4S] cluster contacts are provided by cysteine 410, cysteine 413, and cysteine 417.

It belongs to the ThiC family. 5-hydroxybenzimidazole synthase subfamily. As to quaternary structure, homodimer. [4Fe-4S] cluster is required as a cofactor.

The enzyme catalyses 5-amino-1-(5-phospho-beta-D-ribosyl)imidazole + AH2 + S-adenosyl-L-methionine = 5-hydroxybenzimidazole + 5'-deoxyadenosine + formate + L-methionine + A + NH4(+) + phosphate + 2 H(+). Functionally, catalyzes the conversion of aminoimidazole ribotide (AIR) to 5-hydroxybenzimidazole (5-HBI) in a radical S-adenosyl-L-methionine (SAM)-dependent reaction. Is thus involved in the anaerobic biosynthesis of the benzimidazole lower axial ligand of the cobamide produced by G.sulfurreducens. The chain is 5-hydroxybenzimidazole synthase from Geobacter sulfurreducens (strain ATCC 51573 / DSM 12127 / PCA).